Reading from the N-terminus, the 123-residue chain is Large ribosomal subunit protein bL12 (123 aa).

Belongs to the bacterial ribosomal protein bL12 family. In terms of assembly, homodimer. Part of the ribosomal stalk of the 50S ribosomal subunit. Forms a multimeric L10(L12)X complex, where L10 forms an elongated spine to which 2 to 4 L12 dimers bind in a sequential fashion. Binds GTP-bound translation factors.

Forms part of the ribosomal stalk which helps the ribosome interact with GTP-bound translation factors. Is thus essential for accurate translation. The sequence is that of Large ribosomal subunit protein bL12 from Pseudoalteromonas atlantica (strain T6c / ATCC BAA-1087).